A 399-amino-acid chain; its full sequence is S-adenosylmethionine synthase (399 aa).

H16 is an ATP binding site. Mg(2+) is bound at residue D18. Position 44 (E44) interacts with K(+). Residues E57 and Q100 each coordinate L-methionine. Positions 100–110 (QSSDIAQGVNE) are flexible loop. ATP contacts are provided by residues 177–179 (DAK), 244–245 (RF), D253, 259–260 (RK), A276, and K280. Residue D253 participates in L-methionine binding. L-methionine is bound at residue K284.

This sequence belongs to the AdoMet synthase family. In terms of assembly, homotetramer; dimer of dimers. Requires Mg(2+) as cofactor. K(+) serves as cofactor.

The protein localises to the cytoplasm. It carries out the reaction L-methionine + ATP + H2O = S-adenosyl-L-methionine + phosphate + diphosphate. Its pathway is amino-acid biosynthesis; S-adenosyl-L-methionine biosynthesis; S-adenosyl-L-methionine from L-methionine: step 1/1. Functionally, catalyzes the formation of S-adenosylmethionine (AdoMet) from methionine and ATP. The overall synthetic reaction is composed of two sequential steps, AdoMet formation and the subsequent tripolyphosphate hydrolysis which occurs prior to release of AdoMet from the enzyme. This chain is S-adenosylmethionine synthase, found in Lactococcus lactis subsp. cremoris (strain MG1363).